The primary structure comprises 314 residues: UPF0761 membrane protein VIBHAR_00593 (314 aa).

Helical transmembrane passes span 41–61 (YLAY…LSIL), 104–124 (MTAV…SNID), 143–163 (FSMY…SIAV), 185–205 (FLRW…YFLV), 217–237 (IGAA…AFYI), and 249–269 (ALAA…IVLI).

The protein belongs to the UPF0761 family.

The protein localises to the cell inner membrane. The polypeptide is UPF0761 membrane protein VIBHAR_00593 (Vibrio campbellii (strain ATCC BAA-1116)).